Reading from the N-terminus, the 512-residue chain is MPAASDRETDVVLIGAGIMSATLGAFLKELEPSLTIQMLETLDDCAQESSDSWNNAGTGHAANCEMNYTPQRPDGSIDISKALQVNVEFDLSRQFWSYLIGRGAIADPRSFIHPVPHMSFVHGTENVEFLRKRFKAMSAHHCYEGMEHTEDPRKIAEWAPLVMDGRSGDEPVAATRIITGTDVDYGALTHLLVGHLVSQPGCAVHYNSCVTGLVREQGGRWRIEVRDTASGETRSVRAKFVFIGAGGGALPLLEKSGLPEARGYGGFPVSGIWLRCDDPEINKRHHAKVYGKAAVGSPPMSVPHLDTRVIGGKHSLLFGPYAGFSSKFLKHGSLLDLFESIRPANVKPLLSVARDNFDLTEYLVGQVLQSESHRLAALDEYFPKADPKDWRLQVAGQRVQIIKPDVKRGGLLEFGTELVGADDHSLVALLGASPGASTAAFIAISVLEKCFAGELTASAWLPKLKQIVPSYGVSLIDDADFCRQIRATTAEVLKVDNIPQPAARAPAAAKRA.

This sequence belongs to the MQO family. FAD serves as cofactor.

The catalysed reaction is (S)-malate + a quinone = a quinol + oxaloacetate. It functions in the pathway carbohydrate metabolism; tricarboxylic acid cycle; oxaloacetate from (S)-malate (quinone route): step 1/1. The polypeptide is Probable malate:quinone oxidoreductase (Bradyrhizobium diazoefficiens (strain JCM 10833 / BCRC 13528 / IAM 13628 / NBRC 14792 / USDA 110)).